The chain runs to 280 residues: Aspartate/glutamate leucyltransferase (280 aa).

It belongs to the R-transferase family. Bpt subfamily.

The protein resides in the cytoplasm. The enzyme catalyses N-terminal L-glutamyl-[protein] + L-leucyl-tRNA(Leu) = N-terminal L-leucyl-L-glutamyl-[protein] + tRNA(Leu) + H(+). It carries out the reaction N-terminal L-aspartyl-[protein] + L-leucyl-tRNA(Leu) = N-terminal L-leucyl-L-aspartyl-[protein] + tRNA(Leu) + H(+). Its function is as follows. Functions in the N-end rule pathway of protein degradation where it conjugates Leu from its aminoacyl-tRNA to the N-termini of proteins containing an N-terminal aspartate or glutamate. The protein is Aspartate/glutamate leucyltransferase of Cereibacter sphaeroides (strain KD131 / KCTC 12085) (Rhodobacter sphaeroides).